Reading from the N-terminus, the 587-residue chain is Lipoprotein LpqB (587 aa).

Positions 1–19 are cleaved as a signal peptide; sequence MERLMRLTILLFLGAVLAG. C20 carries the N-palmitoyl cysteine lipid modification. C20 carries S-diacylglycerol cysteine lipidation.

The protein belongs to the LpqB lipoprotein family. As to quaternary structure, interacts with MtrB, probably extracytoplasmically.

The protein resides in the cell membrane. Its subcellular location is the secreted. It localises to the cell wall. Functionally, may modulate activity of the MtrAB system in controlling homeostasis of the cell wall and cell division. The polypeptide is Lipoprotein LpqB (Mycobacterium tuberculosis (strain CDC 1551 / Oshkosh)).